Reading from the N-terminus, the 246-residue chain is Phycobilisome rod-core linker polypeptide CpcG2 (246 aa).

The 179-residue stretch at 11 to 189 (SSQNQRVAGY…YWRDKLENSR (179 aa)) folds into the PBS-linker domain. The tract at residues 224-246 (DTTRRDRPTVPASINPTASFPLR) is disordered. The segment covering 235–246 (ASINPTASFPLR) has biased composition (polar residues).

This sequence belongs to the phycobilisome linker protein family. As to quaternary structure, the phycobilisome is a hemidiscoidal structure that is composed of two distinct substructures: a core complex and a number of rods radiating from the core.

It is found in the cellular thylakoid membrane. Rod-core linker protein required for attachment of phycocyanin to allophycocyanin in cores of phycobilisomes. Its function is as follows. Linker polypeptides determine the state of aggregation and the location of the disk-shaped phycobiliprotein units within the phycobilisome and modulate their spectroscopic properties in order to mediate a directed and optimal energy transfer. The chain is Phycobilisome rod-core linker polypeptide CpcG2 (cpcG2) from Thermosynechococcus vestitus (strain NIES-2133 / IAM M-273 / BP-1).